We begin with the raw amino-acid sequence, 121 residues long: Holo-[acyl-carrier-protein] synthase (121 aa).

2 residues coordinate Mg(2+): D8 and E58.

This sequence belongs to the P-Pant transferase superfamily. AcpS family. The cofactor is Mg(2+).

It is found in the cytoplasm. It catalyses the reaction apo-[ACP] + CoA = holo-[ACP] + adenosine 3',5'-bisphosphate + H(+). Transfers the 4'-phosphopantetheine moiety from coenzyme A to a Ser of acyl-carrier-protein. This Bacillus pumilus (strain SAFR-032) protein is Holo-[acyl-carrier-protein] synthase.